Here is a 106-residue protein sequence, read N- to C-terminus: BLOC-1-related complex subunit 7 (106 aa).

Belongs to the BORCS7 family. As to quaternary structure, component of the BLOC-one-related complex (BORC) which is composed of BLOC1S1, BLOC1S2, BORCS5, BORCS6, BORCS7, BORCS8, KXD1 and SNAPIN.

It localises to the lysosome membrane. In terms of biological role, as part of the BORC complex may play a role in lysosomes movement and localization at the cell periphery. Associated with the cytosolic face of lysosomes, the BORC complex may recruit ARL8B and couple lysosomes to microtubule plus-end-directed kinesin motor. The protein is BLOC-1-related complex subunit 7 of Homo sapiens (Human).